The sequence spans 739 residues: Probable beta-glucosidase L (739 aa).

An N-terminal signal peptide occupies residues 1–17 (MQNLFLSLLAAAVTVHA). A glycan (N-linked (GlcNAc...) asparagine) is linked at Asn-224. The active site involves Asp-252. N-linked (GlcNAc...) asparagine glycosylation is present at Asn-398.

This sequence belongs to the glycosyl hydrolase 3 family.

The protein localises to the secreted. The enzyme catalyses Hydrolysis of terminal, non-reducing beta-D-glucosyl residues with release of beta-D-glucose.. The protein operates within glycan metabolism; cellulose degradation. Beta-glucosidases are one of a number of cellulolytic enzymes involved in the degradation of cellulosic biomass. Catalyzes the last step releasing glucose from the inhibitory cellobiose. The sequence is that of Probable beta-glucosidase L (bglL) from Neosartorya fischeri (strain ATCC 1020 / DSM 3700 / CBS 544.65 / FGSC A1164 / JCM 1740 / NRRL 181 / WB 181) (Aspergillus fischerianus).